The sequence spans 278 residues: Cytidine kinase (278 aa).

ATP is bound at residue 203 to 208 (TRGEKG). D237 acts as the Proton acceptor in catalysis.

This sequence belongs to the carbohydrate kinase PfkB family. Mg(2+) serves as cofactor.

The catalysed reaction is cytidine + ATP = CMP + ADP + H(+). In terms of biological role, involved in nucleoside degradation. Phosphorylates cytidine to CMP. Can also act on deoxycytidine and uridine, but is most active with cytidine. ATP is the most preferred phosphate donor, but it can also use GTP, CTP or UTP. In Thermococcus kodakarensis (strain ATCC BAA-918 / JCM 12380 / KOD1) (Pyrococcus kodakaraensis (strain KOD1)), this protein is Cytidine kinase.